Here is a 155-residue protein sequence, read N- to C-terminus: Aspartate carbamoyltransferase regulatory chain (155 aa).

The Zn(2+) site is built by Cys-111, Cys-116, Cys-137, and Cys-140.

Belongs to the PyrI family. Contains catalytic and regulatory chains. Requires Zn(2+) as cofactor.

Its function is as follows. Involved in allosteric regulation of aspartate carbamoyltransferase. The protein is Aspartate carbamoyltransferase regulatory chain of Haloarcula marismortui (strain ATCC 43049 / DSM 3752 / JCM 8966 / VKM B-1809) (Halobacterium marismortui).